Reading from the N-terminus, the 313-residue chain is Porphobilinogen deaminase (313 aa).

Cysteine 240 is subject to S-(dipyrrolylmethanemethyl)cysteine.

Belongs to the HMBS family. As to quaternary structure, monomer. It depends on dipyrromethane as a cofactor.

The catalysed reaction is 4 porphobilinogen + H2O = hydroxymethylbilane + 4 NH4(+). The protein operates within porphyrin-containing compound metabolism; protoporphyrin-IX biosynthesis; coproporphyrinogen-III from 5-aminolevulinate: step 2/4. Functionally, tetrapolymerization of the monopyrrole PBG into the hydroxymethylbilane pre-uroporphyrinogen in several discrete steps. The sequence is that of Porphobilinogen deaminase from Moorella thermoacetica (strain ATCC 39073 / JCM 9320).